The chain runs to 613 residues: MVTGNMLWSGEDKAMVASVLGKEAFEYLMSGSVSAECSLMAIGNDQNLQNKLSDLVERPNAANFSWNYAIFWQISRSKSGELVLGWGDGCCREPKEAEEREVKKILNLRLDDEGQQRMRKRVLQKLHMLFGGTDEDNYAFGLDRVTDTEMFFLASMYFSFPRGEGGPGKCFGSGKYLWLSDALTSNLDYCARSFLAKSAGMQTIALIPTDVGVVELGSVRSIPESLELLQNIKSCFSSFLSLVRDKQAAGIAAVPEKNEGNNPRLSNSGAVTERTDGNPKIFGHDLNSGTHFREKLAVRKAEERPWDMYQNGNRMPFVNARNGLNPASWAQFSNVKLGKPVELYAPPTPGHNLMNGGREEFRLNNFQHQKPAARMQIDFTGATSRTIVSPAHNVESEHSDVEASCKEDRAGPVDEKRPRKRGRKPANGREEPLNHVEAERQRREKLNQRFYALRAVVPNISKMDKASLLGDAIAYITELQKKLRDMESERELRLGSTSRDAITSEDSPSSEIQIRGPDINIEAANDEVIVRVSCSLETHPLSRIIQIFKEAQINVVESKLSAGNGTVYHTFVIKSSGSEQLTKEKLLAAFSSESNSLRQLSPKLHKVILPSLF.

Residues 48 to 130 are JAZ-interaction domain; sequence LQNKLSDLVE…RVLQKLHMLF (83 aa). Disordered stretches follow at residues 256–285 and 391–441; these read EKNE…FGHD and AHNV…AERQ. Over residues 260–270 the composition is skewed to polar residues; sequence GNNPRLSNSGA. 2 stretches are compositionally biased toward basic and acidic residues: residues 394-417 and 427-441; these read VESE…DEKR and NGRE…AERQ. The segment at 430–443 is basic motif; degenerate; that stretch reads EEPLNHVEAERQRR. The region spanning 430-479 is the bHLH domain; that stretch reads EEPLNHVEAERQRREKLNQRFYALRAVVPNISKMDKASLLGDAIAYITEL. Residues 444-479 are helix-loop-helix motif; it reads EKLNQRFYALRAVVPNISKMDKASLLGDAIAYITEL. The tract at residues 490 to 513 is disordered; it reads RELRLGSTSRDAITSEDSPSSEIQ. The span at 495 to 512 shows a compositional bias: polar residues; it reads GSTSRDAITSEDSPSSEI.

In terms of assembly, interacts with MYC2 (via N-terminus). MTB1 competes with MED25 for binding to MYC2. Interacts (via N-terminus) with JAZ7.

Its subcellular location is the nucleus. Its function is as follows. Transcription factor that negatively regulates jasmonate (JA) signaling. Negatively regulates JA-dependent response to wounding, JA-induced expression of defense genes, JA-dependent responses against herbivorous insects, and JA-dependent resistance against Botrytis cinerea infection. Plays a positive role in resistance against the bacterial pathogen Pseudomonas syringae pv tomato DC3000. The protein is Transcription factor MTB1 of Solanum lycopersicum (Tomato).